Here is a 493-residue protein sequence, read N- to C-terminus: 3-octaprenyl-4-hydroxybenzoate carboxy-lyase (493 aa).

Asn-172 is a binding site for Mn(2+). Residues 175 to 177, 189 to 191, and 194 to 195 contribute to the prenylated FMN site; these read IYR, RWL, and RG. Glu-238 lines the Mn(2+) pocket. The active-site Proton donor is Asp-287.

This sequence belongs to the UbiD family. In terms of assembly, homohexamer. Requires prenylated FMN as cofactor. Mn(2+) is required as a cofactor.

Its subcellular location is the cell membrane. It catalyses the reaction a 4-hydroxy-3-(all-trans-polyprenyl)benzoate + H(+) = a 2-(all-trans-polyprenyl)phenol + CO2. The protein operates within cofactor biosynthesis; ubiquinone biosynthesis. In terms of biological role, catalyzes the decarboxylation of 3-octaprenyl-4-hydroxy benzoate to 2-octaprenylphenol, an intermediate step in ubiquinone biosynthesis. This Shewanella sp. (strain ANA-3) protein is 3-octaprenyl-4-hydroxybenzoate carboxy-lyase.